The primary structure comprises 353 residues: UDP-xylose transporter 2 (353 aa).

10 consecutive transmembrane segments (helical) span residues 7-27, 31-51, 75-95, 100-120, 132-152, 154-174, 194-214, 224-244, 250-270, and 280-300; these read FQLG…SIVI, ALIS…HLLV, VLGF…SLGF, FYQM…TIFF, LVIL…LNML, SVLS…TNTI, AITL…QNVF, FFIV…FLVI, VTYQ…GYLL, and ILGI…CTLE. The interval 308-353 is disordered; sequence TSTQLPQMDENEKDPLVSAENGSGLISDNGVQKQDPVWNSNKDFQA. The segment covering 327-353 has biased composition (polar residues); that stretch reads ENGSGLISDNGVQKQDPVWNSNKDFQA. Phosphoserine is present on S334.

Belongs to the TPT transporter family. TPT (TC 2.A.7.9) subfamily. Ubiquitous.

Its subcellular location is the golgi apparatus membrane. In terms of biological role, nucleotide-sugar transporter that transports UDP-xylose and UMP in a strict counter-exchange mode. The sequence is that of UDP-xylose transporter 2 from Arabidopsis thaliana (Mouse-ear cress).